We begin with the raw amino-acid sequence, 275 residues long: Phenylalanine-4-hydroxylase (275 aa).

His135, His140, and Glu181 together coordinate Fe cation.

It belongs to the biopterin-dependent aromatic amino acid hydroxylase family. Fe(2+) serves as cofactor.

The catalysed reaction is (6R)-L-erythro-5,6,7,8-tetrahydrobiopterin + L-phenylalanine + O2 = (4aS,6R)-4a-hydroxy-L-erythro-5,6,7,8-tetrahydrobiopterin + L-tyrosine. The protein operates within amino-acid degradation; L-phenylalanine degradation; acetoacetate and fumarate from L-phenylalanine: step 1/6. This is Phenylalanine-4-hydroxylase (phhA) from Mesorhizobium japonicum (strain LMG 29417 / CECT 9101 / MAFF 303099) (Mesorhizobium loti (strain MAFF 303099)).